The chain runs to 124 residues: MPTISQLIGSERKRLTRKTKSPALKSCPERRGVCTRVYTSTPKKPNSALRKVARVRLTSGFEVTAYIPGIGHNLQEHSVVLLRGGRVKDLPGVRYHIIRGTLDTAGVKDRRQSRSKYGAKAPKD.

Positions 1 to 28 are disordered; sequence MPTISQLIGSERKRLTRKTKSPALKSCP. Aspartate 89 bears the 3-methylthioaspartic acid mark. The tract at residues 104–124 is disordered; that stretch reads TAGVKDRRQSRSKYGAKAPKD.

The protein belongs to the universal ribosomal protein uS12 family. Part of the 30S ribosomal subunit. Contacts proteins S8 and S17. May interact with IF1 in the 30S initiation complex.

Functionally, with S4 and S5 plays an important role in translational accuracy. Its function is as follows. Interacts with and stabilizes bases of the 16S rRNA that are involved in tRNA selection in the A site and with the mRNA backbone. Located at the interface of the 30S and 50S subunits, it traverses the body of the 30S subunit contacting proteins on the other side and probably holding the rRNA structure together. The combined cluster of proteins S8, S12 and S17 appears to hold together the shoulder and platform of the 30S subunit. The sequence is that of Small ribosomal subunit protein uS12 from Prochlorococcus marinus (strain MIT 9312).